The following is a 159-amino-acid chain: 6,7-dimethyl-8-ribityllumazine synthase (159 aa).

Residues F22, 57-59 (TYE), and 81-83 (TII) contribute to the 5-amino-6-(D-ribitylamino)uracil site. 86-87 (ST) is a (2S)-2-hydroxy-3-oxobutyl phosphate binding site. H89 functions as the Proton donor in the catalytic mechanism. M114 provides a ligand contact to 5-amino-6-(D-ribitylamino)uracil. Residue R128 participates in (2S)-2-hydroxy-3-oxobutyl phosphate binding.

It belongs to the DMRL synthase family. In terms of assembly, forms an icosahedral capsid composed of 60 subunits, arranged as a dodecamer of pentamers.

The enzyme catalyses (2S)-2-hydroxy-3-oxobutyl phosphate + 5-amino-6-(D-ribitylamino)uracil = 6,7-dimethyl-8-(1-D-ribityl)lumazine + phosphate + 2 H2O + H(+). It participates in cofactor biosynthesis; riboflavin biosynthesis; riboflavin from 2-hydroxy-3-oxobutyl phosphate and 5-amino-6-(D-ribitylamino)uracil: step 1/2. Functionally, catalyzes the formation of 6,7-dimethyl-8-ribityllumazine by condensation of 5-amino-6-(D-ribitylamino)uracil with 3,4-dihydroxy-2-butanone 4-phosphate. This is the penultimate step in the biosynthesis of riboflavin. This is 6,7-dimethyl-8-ribityllumazine synthase from Buchnera aphidicola subsp. Schizaphis graminum (strain Sg).